Reading from the N-terminus, the 394-residue chain is Acetyl-CoA acetyltransferase (394 aa).

The active-site Acyl-thioester intermediate is Cys88. Active-site proton acceptor residues include His349 and Cys379.

It belongs to the thiolase-like superfamily. Thiolase family.

It is found in the cytoplasm. It carries out the reaction 2 acetyl-CoA = acetoacetyl-CoA + CoA. Its pathway is metabolic intermediate biosynthesis; (R)-mevalonate biosynthesis; (R)-mevalonate from acetyl-CoA: step 1/3. This is Acetyl-CoA acetyltransferase (atoB) from Escherichia coli (strain K12).